We begin with the raw amino-acid sequence, 1186 residues long: Major DNA-binding protein (1186 aa).

The segment at 495 to 508 is a zinc-finger region; it reads CCLCSLDNRHSCAH. The Required for filament formation signature appears at 839–840; the sequence is FW. A required for nuclear localization region spans residues 1160–1186; it reads RRRPLACSDLFGDAPAEKRNDLTLDML.

The protein belongs to the herpesviridae major DNA-binding protein family. As to quaternary structure, homooligomers. Forms double-helical filaments necessary for the formation of replication compartments within the host nucleus. Interacts with the origin-binding protein. Interacts with the helicase primase complex; this interaction stimulates primer synthesis activity of the helicase-primase complex. Interacts with the DNA polymerase. Interacts with the alkaline exonuclease; this interaction increases its nuclease processivity.

It localises to the host nucleus. Its function is as follows. Plays several crucial roles in viral infection. Participates in the opening of the viral DNA origin to initiate replication by interacting with the origin-binding protein. May disrupt loops, hairpins and other secondary structures present on ssDNA to reduce and eliminate pausing of viral DNA polymerase at specific sites during elongation. Promotes viral DNA recombination by performing strand-transfer, characterized by the ability to transfer a DNA strand from a linear duplex to a complementary single-stranded DNA circle. Can also catalyze the renaturation of complementary single strands. Additionally, reorganizes the host cell nucleus, leading to the formation of prereplicative sites and replication compartments. This process is driven by the protein which can form double-helical filaments in the absence of DNA. The polypeptide is Major DNA-binding protein (Bovine herpesvirus 2 (strain BMV) (BoHV-2)).